A 20-amino-acid polypeptide reads, in one-letter code: Conotoxin PnMLKM-D0211 (20 aa).

The propeptide occupies V1–R3. Cystine bridges form between C4/C18, C5/C14, and C10/C17. The residue at position 16 (P16) is a 4-hydroxyproline. W19 carries the tryptophan amide modification.

It belongs to the conotoxin M superfamily. Expressed by the venom duct.

It is found in the secreted. This Conus pennaceus (Feathered cone) protein is Conotoxin PnMLKM-D0211.